A 222-amino-acid polypeptide reads, in one-letter code: Pyridoxine/pyridoxamine 5'-phosphate oxidase (222 aa).

Residues 71-76, 86-87, Lys-93, and Gln-115 contribute to the FMN site; these read RMVLLK and YT. Position 76 (Lys-76) interacts with substrate. Substrate is bound by residues Tyr-133, Arg-137, and Ser-141. Residues 150–151 and Trp-195 contribute to the FMN site; that span reads QS. 201–203 contacts substrate; it reads RLH. Residue Arg-205 coordinates FMN.

The protein belongs to the pyridoxamine 5'-phosphate oxidase family. Homodimer. It depends on FMN as a cofactor.

It carries out the reaction pyridoxamine 5'-phosphate + O2 + H2O = pyridoxal 5'-phosphate + H2O2 + NH4(+). The enzyme catalyses pyridoxine 5'-phosphate + O2 = pyridoxal 5'-phosphate + H2O2. It functions in the pathway cofactor metabolism; pyridoxal 5'-phosphate salvage; pyridoxal 5'-phosphate from pyridoxamine 5'-phosphate: step 1/1. The protein operates within cofactor metabolism; pyridoxal 5'-phosphate salvage; pyridoxal 5'-phosphate from pyridoxine 5'-phosphate: step 1/1. Its function is as follows. Catalyzes the oxidation of either pyridoxine 5'-phosphate (PNP) or pyridoxamine 5'-phosphate (PMP) into pyridoxal 5'-phosphate (PLP). This chain is Pyridoxine/pyridoxamine 5'-phosphate oxidase, found in Caulobacter vibrioides (strain ATCC 19089 / CIP 103742 / CB 15) (Caulobacter crescentus).